Here is a 341-residue protein sequence, read N- to C-terminus: HTH-type transcriptional repressor PurR (341 aa).

In terms of domain architecture, HTH lacI-type spans 2–56; that stretch reads ATIKDVAKRANVSTTTVSHVINKTRFVAEETRNAVWAAIKELHYSPSAVARSLKV. Positions 4-23 form a DNA-binding region, H-T-H motif; that stretch reads IKDVAKRANVSTTTVSHVIN. Residues 48 to 56 mediate DNA binding; sequence SAVARSLKV. 5 residues coordinate hypoxanthine: tyrosine 73, arginine 190, threonine 192, phenylalanine 221, and aspartate 275.

In terms of assembly, homodimer.

Its pathway is purine metabolism; purine nucleotide biosynthesis [regulation]. In terms of biological role, is the main repressor of the genes involved in the de novo synthesis of purine nucleotides, regulating purB, purC, purEK, purF, purHD, purL, purMN and guaBA expression. PurR is allosterically activated to bind its cognate DNA by binding the purine corepressors, hypoxanthine or guanine, thereby effecting transcription repression. The chain is HTH-type transcriptional repressor PurR from Klebsiella pneumoniae (strain 342).